We begin with the raw amino-acid sequence, 409 residues long: Elongation factor Tu, chloroplastic (409 aa).

In terms of domain architecture, tr-type G spans 10-214; sequence KPHVNIGTIG…AVDTYIPTPE (205 aa). A G1 region spans residues 19 to 26; it reads GHVDHGKT. 19-26 lines the GTP pocket; that stretch reads GHVDHGKT. Threonine 26 provides a ligand contact to Mg(2+). The segment at 60–64 is G2; the sequence is GITIN. The G3 stretch occupies residues 81-84; sequence DCPG. GTP is bound by residues 81-85 and 136-139; these read DCPGH and NKED. Positions 136-139 are G4; sequence NKED. Positions 174–176 are G5; it reads SAL.

This sequence belongs to the TRAFAC class translation factor GTPase superfamily. Classic translation factor GTPase family. EF-Tu/EF-1A subfamily.

The protein resides in the plastid. It localises to the chloroplast. The enzyme catalyses GTP + H2O = GDP + phosphate + H(+). In terms of biological role, GTP hydrolase that promotes the GTP-dependent binding of aminoacyl-tRNA to the A-site of ribosomes during protein biosynthesis. The protein is Elongation factor Tu, chloroplastic (tufA) of Pyropia yezoensis (Susabi-nori).